The chain runs to 174 residues: Superoxide dismutase [Cu-Zn] (174 aa).

Positions 1 to 23 (MIRLSAAAALGLAAALAASPALA) are cleaved as a signal peptide. Positions 68, 70, and 86 each coordinate Cu cation. Cys-75 and Cys-170 are disulfide-bonded. The Zn(2+) site is built by His-86, His-95, Asp-104, and Asp-107. A Cu cation-binding site is contributed by His-150.

This sequence belongs to the Cu-Zn superoxide dismutase family. As to quaternary structure, homodimer. Requires Cu cation as cofactor. It depends on Zn(2+) as a cofactor.

The protein localises to the periplasm. It carries out the reaction 2 superoxide + 2 H(+) = H2O2 + O2. In terms of biological role, destroys radicals which are normally produced within the cells and which are toxic to biological systems. May function against extracytoplasmic toxic oxygen species. This Caulobacter vibrioides (strain ATCC 19089 / CIP 103742 / CB 15) (Caulobacter crescentus) protein is Superoxide dismutase [Cu-Zn] (sodC).